Reading from the N-terminus, the 978-residue chain is Probable serine/threonine-protein kinase PLK (978 aa).

The segment covering 19–36 (IQIQQQQFKQPQQQPQQK) has biased composition (low complexity). Disordered regions lie at residues 19 to 66 (IQIQ…SSIH) and 121 to 143 (QQQQQQQQMPPPQSLPNKSNEPQ). Residues 37–53 (SNSCFSDQENYPANIQP) show a composition bias toward polar residues. The segment covering 54–64 (SSSTSSSSSSS) has biased composition (low complexity). The region spanning 163-416 (YRQGEFLGKG…LTQILEHDFF (254 aa)) is the Protein kinase domain. Residues 169–177 (LGKGGFAKC) and Lys192 each bind ATP. The active-site Proton acceptor is the Asp286. 2 disordered regions span residues 463–554 (GTTS…FANL) and 601–638 (ENQQQQQQQQQQQQQQQQQQQRVNNNINNNGNTVTVTT). 2 stretches are compositionally biased toward low complexity: residues 473–492 (HHYQQYQQQPQQQYNNNYQQ) and 500–549 (INNM…NINN). Coiled-coil stretches lie at residues 497-555 (KKQI…ANLS) and 592-630 (IKQQYTNMNENQQQQQQQQQQQQQQQQQQQRVNNNINNN). The region spanning 696 to 780 (YISQYADFTN…IKYFLNHFTN (85 aa)) is the POLO box 1 domain. The disordered stretch occupies residues 798 to 819 (NNNNNNNVENVTNNNNNNSNNS). A POLO box 2 domain is found at 826–904 (YVKKWIKFDN…IYGTLSNNLY (79 aa)). Positions 908 to 978 (PESSFQQLPQ…SIPQPQLINQ (71 aa)) are disordered. Residues 913–978 (QQLPQQQYQQ…SIPQPQLINQ (66 aa)) are compositionally biased toward low complexity.

Belongs to the protein kinase superfamily. Ser/Thr protein kinase family. CDC5/Polo subfamily.

It carries out the reaction L-seryl-[protein] + ATP = O-phospho-L-seryl-[protein] + ADP + H(+). The enzyme catalyses L-threonyl-[protein] + ATP = O-phospho-L-threonyl-[protein] + ADP + H(+). In Dictyostelium discoideum (Social amoeba), this protein is Probable serine/threonine-protein kinase PLK (PLK).